Consider the following 175-residue polypeptide: Adenine phosphoribosyltransferase (175 aa).

The protein belongs to the purine/pyrimidine phosphoribosyltransferase family. Homodimer.

The protein localises to the cytoplasm. It catalyses the reaction AMP + diphosphate = 5-phospho-alpha-D-ribose 1-diphosphate + adenine. Its pathway is purine metabolism; AMP biosynthesis via salvage pathway; AMP from adenine: step 1/1. In terms of biological role, catalyzes a salvage reaction resulting in the formation of AMP, that is energically less costly than de novo synthesis. This chain is Adenine phosphoribosyltransferase, found in Oenococcus oeni (strain ATCC BAA-331 / PSU-1).